The primary structure comprises 383 residues: S-adenosylmethionine synthase (383 aa).

ATP is bound at residue H15. Position 17 (D17) interacts with Mg(2+). Residue E43 participates in K(+) binding. E56 and Q99 together coordinate L-methionine. Residues 99 to 109 form a flexible loop region; sequence QSPDINQGVDR. Residues 164 to 166, 230 to 231, D239, 245 to 246, A262, and K266 contribute to the ATP site; these read DAK, RF, and RK. L-methionine is bound at residue D239. L-methionine is bound at residue K270.

The protein belongs to the AdoMet synthase family. In terms of assembly, homotetramer; dimer of dimers. It depends on Mg(2+) as a cofactor. The cofactor is K(+).

It is found in the cytoplasm. The catalysed reaction is L-methionine + ATP + H2O = S-adenosyl-L-methionine + phosphate + diphosphate. It participates in amino-acid biosynthesis; S-adenosyl-L-methionine biosynthesis; S-adenosyl-L-methionine from L-methionine: step 1/1. In terms of biological role, catalyzes the formation of S-adenosylmethionine (AdoMet) from methionine and ATP. The overall synthetic reaction is composed of two sequential steps, AdoMet formation and the subsequent tripolyphosphate hydrolysis which occurs prior to release of AdoMet from the enzyme. In Actinobacillus pleuropneumoniae serotype 7 (strain AP76), this protein is S-adenosylmethionine synthase.